A 178-amino-acid chain; its full sequence is ATP synthase subunit delta (178 aa).

Belongs to the ATPase delta chain family. In terms of assembly, F-type ATPases have 2 components, F(1) - the catalytic core - and F(0) - the membrane proton channel. F(1) has five subunits: alpha(3), beta(3), gamma(1), delta(1), epsilon(1). F(0) has three main subunits: a(1), b(2) and c(10-14). The alpha and beta chains form an alternating ring which encloses part of the gamma chain. F(1) is attached to F(0) by a central stalk formed by the gamma and epsilon chains, while a peripheral stalk is formed by the delta and b chains.

It is found in the cell inner membrane. Functionally, f(1)F(0) ATP synthase produces ATP from ADP in the presence of a proton or sodium gradient. F-type ATPases consist of two structural domains, F(1) containing the extramembraneous catalytic core and F(0) containing the membrane proton channel, linked together by a central stalk and a peripheral stalk. During catalysis, ATP synthesis in the catalytic domain of F(1) is coupled via a rotary mechanism of the central stalk subunits to proton translocation. Its function is as follows. This protein is part of the stalk that links CF(0) to CF(1). It either transmits conformational changes from CF(0) to CF(1) or is implicated in proton conduction. In Dechloromonas aromatica (strain RCB), this protein is ATP synthase subunit delta.